A 637-amino-acid chain; its full sequence is Sodium-dependent nutrient amino acid transporter 1 (637 aa).

Residues 1–17 are compositionally biased toward polar residues; it reads MELKTMPQNGANAGTQH. Positions 1-39 are disordered; the sequence is MELKTMPQNGANAGTQHNNNSNNKPDNNEKEAQKKEPER. Topologically, residues 1 to 47 are cytoplasmic; that stretch reads MELKTMPQNGANAGTQHNNNSNNKPDNNEKEAQKKEPERTNWSNGLE. Over residues 26–39 the composition is skewed to basic and acidic residues; the sequence is DNNEKEAQKKEPER. 3 helical membrane-spanning segments follow: residues 48 to 68, 75 to 95, and 128 to 148; these read FLMS…FPFT, GAFL…MYYL, and TICI…YLFV. 2 N-linked (GlcNAc...) asparagine glycosylation sites follow: N181 and N195. The next 9 membrane-spanning stretches (helical) occupy residues 225–245, 254–274, 303–323, 337–357, 397–417, 443–463, 470–490, 515–535, and 549–569; these read PDWK…LVIM, AAYF…GRAV, AVVQ…MFAS, IVTT…FAIL, LFSA…IVAL, ICGF…ILTL, TYVV…IYGL, FFTP…ISPI, and AGWV…WWYI.

The protein belongs to the sodium:neurotransmitter symporter (SNF) (TC 2.A.22) family.

The protein localises to the membrane. In terms of biological role, unusual broad substrate spectrum amino acid:sodium cotransporter that promotes absorption of the D isomers of essential amino acids. Neutral amino acids are the preferred substrates, especially methionine and phenylalanine. This is Sodium-dependent nutrient amino acid transporter 1 from Drosophila virilis (Fruit fly).